Here is a 324-residue protein sequence, read N- to C-terminus: tRNA-modifying protein YgfZ (324 aa).

W184 serves as a coordination point for folate.

The protein belongs to the tRNA-modifying YgfZ family.

The protein resides in the cytoplasm. Its function is as follows. Folate-binding protein involved in regulating the level of ATP-DnaA and in the modification of some tRNAs. It is probably a key factor in regulatory networks that act via tRNA modification, such as initiation of chromosomal replication. The chain is tRNA-modifying protein YgfZ from Vibrio vulnificus (strain YJ016).